We begin with the raw amino-acid sequence, 335 residues long: Phosphate acyltransferase (335 aa).

This sequence belongs to the PlsX family. In terms of assembly, homodimer. Probably interacts with PlsY.

The protein resides in the cytoplasm. The enzyme catalyses a fatty acyl-[ACP] + phosphate = an acyl phosphate + holo-[ACP]. It functions in the pathway lipid metabolism; phospholipid metabolism. Functionally, catalyzes the reversible formation of acyl-phosphate (acyl-PO(4)) from acyl-[acyl-carrier-protein] (acyl-ACP). This enzyme utilizes acyl-ACP as fatty acyl donor, but not acyl-CoA. The chain is Phosphate acyltransferase from Desulforudis audaxviator (strain MP104C).